Here is a 145-residue protein sequence, read N- to C-terminus: Histone H2B.10 (145 aa).

Basic and acidic residues predominate over residues 1-15; sequence MAKADKKPAEKKPAE. Residues 1-53 are disordered; sequence MAKADKKPAEKKPAEKTPAAEPAAAAEKKPKAGKKLPKEPAGAGDKKKKRSKK. Lys-3 carries the post-translational modification N6-methyllysine. Lys-6 and Lys-11 each carry N6-acetyllysine. Lys-12 carries the N6,N6-dimethyllysine modification. N6-acetyllysine is present on residues Lys-16, Lys-28, and Lys-34. Over residues 16-25 the composition is skewed to low complexity; that stretch reads KTPAAEPAAA. At Lys-35 the chain carries N6-acetyllysine; partial. Lys-141 is covalently cross-linked (Glycyl lysine isopeptide (Lys-Gly) (interchain with G-Cter in ubiquitin)).

This sequence belongs to the histone H2B family. As to quaternary structure, the nucleosome is a histone octamer containing two molecules each of H2A, H2B, H3 and H4 assembled in one H3-H4 heterotetramer and two H2A-H2B heterodimers. The octamer wraps approximately 147 bp of DNA. Interacts with ORTH2. Post-translationally, can be acetylated to form H2BK5ac, H2BK10ac, H2BK15ac, H2BK27ac, H2BK33ac and H2BK34ac. Dimethylated to form H2BK11me2. In terms of processing, monoubiquitinated by BRE1 to form H2BK143ub1 and deubiquitinated by UBP26. Required for heterochromatic histone H3 di- and trimethylation at H3K4me. May give a specific tag for epigenetic transcriptional activation.

It localises to the nucleus. The protein localises to the chromosome. In terms of biological role, core component of nucleosome. Nucleosomes wrap and compact DNA into chromatin, limiting DNA accessibility to the cellular machineries which require DNA as a template. Histones thereby play a central role in transcription regulation, DNA repair, DNA replication and chromosomal stability. DNA accessibility is regulated via a complex set of post-translational modifications of histones, also called histone code, and nucleosome remodeling. This Arabidopsis thaliana (Mouse-ear cress) protein is Histone H2B.10.